The chain runs to 84 residues: Large ribosomal subunit protein uL29 (84 aa).

This sequence belongs to the universal ribosomal protein uL29 family.

The polypeptide is Large ribosomal subunit protein uL29 (Mycoplasma mobile (strain ATCC 43663 / 163K / NCTC 11711) (Mesomycoplasma mobile)).